A 352-amino-acid polypeptide reads, in one-letter code: Rhodopsin (352 aa).

The Extracellular segment spans residues 1 to 36 (MNGTEGPFFYIPMVNTTGIVRSPYEYPQYYLVNPAA). N-linked (GlcNAc...) asparagine glycosylation is found at Asn2 and Asn15. The helical transmembrane segment at 37 to 61 (YAALGAYMFFLILTGFPINFLTLYV) threads the bilayer. The Cytoplasmic segment spans residues 62–73 (TLEHKKLRTALN). Residues 74-96 (LILLNLAVADLFMVFGGFTTTMY) form a helical membrane-spanning segment. At 97–110 (TSMHGYFVLGRLGC) the chain is on the extracellular side. An intrachain disulfide couples Cys110 to Cys187. A helical membrane pass occupies residues 111 to 133 (NVEGFFATLGGEIALWSLVVLAV). Residues 134–136 (ERW) carry the 'Ionic lock' involved in activated form stabilization motif. The Cytoplasmic segment spans residues 134–152 (ERWVVVCKPISNFRFTENH). Residues 153–173 (AIMGVAFSWIMAATCAVPPLV) traverse the membrane as a helical segment. The Extracellular segment spans residues 174 to 202 (GWSRYIPEGMQCSCGVDYYTRAEGFNNES). A helical transmembrane segment spans residues 203–224 (FVIYMFIVHFLAPLIVIFFCYG). Residues 225 to 252 (RLLCAVKEAAAAQQESETTQRAEREVTR) are Cytoplasmic-facing. A helical membrane pass occupies residues 253 to 274 (MVIIMVIGFLTSWLPYASVAWY). Residues 275–286 (IFTHQGTEFGPL) lie on the Extracellular side of the membrane. Residues 287–308 (FMTIPAFFAKSSALYNPMIYIC) form a helical membrane-spanning segment. Lys296 carries the post-translational modification N6-(retinylidene)lysine. The Cytoplasmic segment spans residues 309-352 (MNKQFRHCMITTLCCGKNPFEEEEGASTTKTEASSVSSSSVSPA). Residues Cys322 and Cys323 are each lipidated (S-palmitoyl cysteine). Residues 331–352 (EEGASTTKTEASSVSSSSVSPA) are disordered. The segment covering 342-352 (SSVSSSSVSPA) has biased composition (low complexity).

The protein belongs to the G-protein coupled receptor 1 family. Opsin subfamily. Phosphorylated on some or all of the serine and threonine residues present in the C-terminal region. Post-translationally, contains one covalently linked retinal chromophore.

Its subcellular location is the membrane. The protein resides in the cell projection. The protein localises to the cilium. It is found in the photoreceptor outer segment. In terms of biological role, photoreceptor required for image-forming vision at low light intensity. While most salt water fish species use retinal as chromophore, most freshwater fish use 3-dehydroretinal, or a mixture of retinal and 3-dehydroretinal. Light-induced isomerization of 11-cis to all-trans retinal triggers a conformational change that activates signaling via G-proteins. Subsequent receptor phosphorylation mediates displacement of the bound G-protein alpha subunit by arrestin and terminates signaling. This chain is Rhodopsin (rho), found in Pomatoschistus minutus (Sand goby).